Reading from the N-terminus, the 1090-residue chain is Exoglucanase B (1090 aa).

The first 33 residues, 1-33 (MSSTTRRRSAWVAAATVGVSSFLAVAGITPAIA), serve as a signal peptide directing secretion. Residues 34 to 53 (AAGAGQPATVTVPAASPVRA) constitute a propeptide that is removed on maturation. The segment at 54–699 (AVDGEYAQRF…RLFDDGTTTP (646 aa)) is catalytic. The active-site Nucleophile is the Asp513. Fibronectin type-III domains are found at residues 706–791 (VPTG…TKAT), 797–887 (APSV…TKSD), and 897–984 (VPAG…TKTP). One can recognise a CBM2 domain in the interval 983-1090 (TPQTGGSCSV…SFTLNGASCT (108 aa)). Cys990 and Cys1089 are disulfide-bonded. A disordered region spans residues 1069–1090 (NGSHTGQNPNPASFTLNGASCT). Polar residues predominate over residues 1070-1090 (GSHTGQNPNPASFTLNGASCT).

The protein belongs to the glycosyl hydrolase 48 (cellulase L) family.

The catalysed reaction is Hydrolysis of (1-&gt;4)-beta-D-glucosidic linkages in cellulose and cellotetraose, releasing cellobiose from the non-reducing ends of the chains.. In terms of biological role, hydrolyzes cellohexaose to a mixture of cellotetraose, cellotriose and cellobiose, with only a trace of glucose. It hydrolyzed cellopentaose to cellotriose and cellobiose, and cellotetraose to cellobiose, but it did not hydrolyze cellotriose. Also has weak endoglucanase activity. Hydrolyzes glucosidic bonds with inversion of anomeric configuration. The chain is Exoglucanase B (cbhB) from Cellulomonas fimi (strain ATCC 484 / DSM 20113 / JCM 1341 / CCUG 24087 / LMG 16345 / NBRC 15513 / NCIMB 8980 / NCTC 7547 / NRS-133).